Reading from the N-terminus, the 284-residue chain is Bifunctional protein FolD 1 (284 aa).

NADP(+)-binding positions include 164–166 (GRS), Ser-189, and Ile-230.

The protein belongs to the tetrahydrofolate dehydrogenase/cyclohydrolase family. As to quaternary structure, homodimer.

It carries out the reaction (6R)-5,10-methylene-5,6,7,8-tetrahydrofolate + NADP(+) = (6R)-5,10-methenyltetrahydrofolate + NADPH. The enzyme catalyses (6R)-5,10-methenyltetrahydrofolate + H2O = (6R)-10-formyltetrahydrofolate + H(+). It functions in the pathway one-carbon metabolism; tetrahydrofolate interconversion. Catalyzes the oxidation of 5,10-methylenetetrahydrofolate to 5,10-methenyltetrahydrofolate and then the hydrolysis of 5,10-methenyltetrahydrofolate to 10-formyltetrahydrofolate. This chain is Bifunctional protein FolD 1, found in Rubrobacter xylanophilus (strain DSM 9941 / JCM 11954 / NBRC 16129 / PRD-1).